Here is a 94-residue protein sequence, read N- to C-terminus: Venom peptide SjAPI (94 aa).

The N-terminal stretch at 1-24 (MKWGALLCIFGFLAFCSVLDRGLG) is a signal peptide. Positions 25-30 (WIPDIW) are excised as a propeptide. Disulfide bonds link Cys33/Cys70, Cys43/Cys66, Cys47/Cys62, Cys51/Cys92, and Cys72/Cys86. A TIL domain is found at 33–92 (CSSKNEEFQQCGSSCPETCANHKNPEPKSCAAVCFVGCVCKPGFIRDDLKGSICVKPEDC). The segment at 63–65 (AAV) is protease binding loop.

Belongs to the serine protease inhibitor-like (TIL domain-containing) family. Expressed by the venom gland.

It is found in the secreted. Its function is as follows. Recombinant protein inhibits both alpha-chymotrypsin (Ki=97.1 nM) and elastase (Ki=3700 nM). This is Venom peptide SjAPI from Scorpiops jendeki (Scorpion).